The primary structure comprises 114 residues: Non-specific lipid-transfer protein 1 (114 aa).

An N-terminal signal peptide occupies residues 1 to 23 (MEIAGKIACFVVLCMVVAAPCAE). 4 disulfides stabilise this stretch: C27/C73, C37/C50, C51/C96, and C71/C110.

Belongs to the plant LTP family. High expression in leaf epidermis and shoot apex, and also in root epidermis during seedling germination.

Plant non-specific lipid-transfer proteins transfer phospholipids as well as galactolipids across membranes. Binds cis-unsaturated fatty acids and jasmonic acid with a higher affinity than linear chain fatty acids. Formation of the complex with jasmonic acid results in a conformational change facilitating the LPT1 binding on the elicitin plasma membrane receptor that is known to be involved in plant defense induction. May also play a role in wax or cutin deposition in the cell walls of expanding epidermal cells and certain secretory tissues. In Nicotiana tabacum (Common tobacco), this protein is Non-specific lipid-transfer protein 1 (LTP1).